A 179-amino-acid polypeptide reads, in one-letter code: Large ribosomal subunit protein uL5 (179 aa).

Lys-3 bears the N6-acetyllysine mark.

Belongs to the universal ribosomal protein uL5 family. Part of the 50S ribosomal subunit; part of the 5S rRNA/L5/L18/L25 subcomplex. Contacts the 5S rRNA and the P site tRNA. Forms a bridge to the 30S subunit in the 70S ribosome.

This is one of the proteins that bind and probably mediate the attachment of the 5S RNA into the large ribosomal subunit, where it forms part of the central protuberance. In the 70S ribosome it contacts protein S13 of the 30S subunit (bridge B1b), connecting the 2 subunits; this bridge is implicated in subunit movement. Contacts the P site tRNA; the 5S rRNA and some of its associated proteins might help stabilize positioning of ribosome-bound tRNAs. The chain is Large ribosomal subunit protein uL5 from Shigella flexneri.